We begin with the raw amino-acid sequence, 300 residues long: Tetrahydromethanopterin S-methyltransferase subunit E (300 aa).

Helical transmembrane passes span 62–82, 86–106, 135–155, 158–178, 226–246, and 261–281; these read PVSYGLYVAAAGATAWALMGM, PILAIIVGSAVAALVHGAYSV, PIVGHGFIAVFCMLFAAYLAV, LGNPFPLPLVALIFGITVGAI, YFCSKLGGPLTGLAFGLIIFL, and LITKAAIAIVVGLIVVITTLL.

This sequence belongs to the MtrE family. In terms of assembly, the complex is composed of 8 subunits; MtrA, MtrB, MtrC, MtrD, MtrE, MtrF, MtrG and MtrH.

It is found in the cell membrane. The catalysed reaction is 5-methyl-5,6,7,8-tetrahydromethanopterin + coenzyme M + 2 Na(+)(in) = 5,6,7,8-tetrahydromethanopterin + methyl-coenzyme M + 2 Na(+)(out). It functions in the pathway one-carbon metabolism; methanogenesis from CO(2); methyl-coenzyme M from 5,10-methylene-5,6,7,8-tetrahydromethanopterin: step 2/2. Part of a complex that catalyzes the formation of methyl-coenzyme M and tetrahydromethanopterin from coenzyme M and methyl-tetrahydromethanopterin. This is an energy-conserving, sodium-ion translocating step. The protein is Tetrahydromethanopterin S-methyltransferase subunit E of Methanococcus aeolicus (strain ATCC BAA-1280 / DSM 17508 / OCM 812 / Nankai-3).